We begin with the raw amino-acid sequence, 140 residues long: ATP synthase epsilon chain (140 aa).

Belongs to the ATPase epsilon chain family. F-type ATPases have 2 components, CF(1) - the catalytic core - and CF(0) - the membrane proton channel. CF(1) has five subunits: alpha(3), beta(3), gamma(1), delta(1), epsilon(1). CF(0) has three main subunits: a, b and c.

It localises to the cell inner membrane. Its function is as follows. Produces ATP from ADP in the presence of a proton gradient across the membrane. This is ATP synthase epsilon chain from Neisseria meningitidis serogroup C (strain 053442).